The primary structure comprises 98 residues: ATP synthase subunit c (98 aa).

The next 2 membrane-spanning stretches (helical) occupy residues 27–47 and 73–93; these read ALALSAPFAVGLAALGSGLGL and IIGAALIEALTIYALIVFFVV.

This sequence belongs to the ATPase C chain family. In terms of assembly, F-type ATPases have 2 components, F(1) - the catalytic core - and F(0) - the membrane proton channel. F(1) has five subunits: alpha(3), beta(3), gamma(1), delta(1), epsilon(1). F(0) has three main subunits: a(1), b(2) and c(10-14). The alpha and beta chains form an alternating ring which encloses part of the gamma chain. F(1) is attached to F(0) by a central stalk formed by the gamma and epsilon chains, while a peripheral stalk is formed by the delta and b chains.

It is found in the cell inner membrane. F(1)F(0) ATP synthase produces ATP from ADP in the presence of a proton or sodium gradient. F-type ATPases consist of two structural domains, F(1) containing the extramembraneous catalytic core and F(0) containing the membrane proton channel, linked together by a central stalk and a peripheral stalk. During catalysis, ATP synthesis in the catalytic domain of F(1) is coupled via a rotary mechanism of the central stalk subunits to proton translocation. Functionally, key component of the F(0) channel; it plays a direct role in translocation across the membrane. A homomeric c-ring of between 10-14 subunits forms the central stalk rotor element with the F(1) delta and epsilon subunits. The chain is ATP synthase subunit c from Protochlamydia amoebophila (strain UWE25).